A 697-amino-acid chain; its full sequence is Polyribonucleotide nucleotidyltransferase (697 aa).

Residues aspartate 489 and aspartate 495 each contribute to the Mg(2+) site. Residues 556-615 (PRIETIKIKPDKIREVIGSGGKVIRGITEATGVKIEIQDDGTINIASADPEATKKAIAMI) enclose the KH domain. Residues 625 to 693 (GKTYKGRIVK…RSGRVKLSRK (69 aa)) enclose the S1 motif domain.

Belongs to the polyribonucleotide nucleotidyltransferase family. Requires Mg(2+) as cofactor.

The protein resides in the cytoplasm. It catalyses the reaction RNA(n+1) + phosphate = RNA(n) + a ribonucleoside 5'-diphosphate. In terms of biological role, involved in mRNA degradation. Catalyzes the phosphorolysis of single-stranded polyribonucleotides processively in the 3'- to 5'-direction. This Bdellovibrio bacteriovorus (strain ATCC 15356 / DSM 50701 / NCIMB 9529 / HD100) protein is Polyribonucleotide nucleotidyltransferase.